Consider the following 243-residue polypeptide: MGQKINPIGFRLGINRTWDSRWFADNAEYGQLLHEDLKMRKFVMSELKQAGISKVVIERPHKKCRVTIHSARPGLIIGRKGADIDKLRKKLSEMTNSETHLNIVEVRKPEVDATLVAQSIAQQLERRVAFRRAMKRAVQSAMRLGAEGIKITCAGRLGGAEIARTEWYREGRVPLHTLRADIDYGTAEAETAFGICGIKVWIFKGEILEHDPMASERRAMEGDAQGPASRDRDRDRDRRRDNA.

Positions 39-107 (MRKFVMSELK…ETHLNIVEVR (69 aa)) constitute a KH type-2 domain. The segment at 214–243 (ASERRAMEGDAQGPASRDRDRDRDRRRDNA) is disordered. Residues 229 to 243 (SRDRDRDRDRRRDNA) show a composition bias toward basic and acidic residues.

Belongs to the universal ribosomal protein uS3 family. Part of the 30S ribosomal subunit. Forms a tight complex with proteins S10 and S14.

Functionally, binds the lower part of the 30S subunit head. Binds mRNA in the 70S ribosome, positioning it for translation. The polypeptide is Small ribosomal subunit protein uS3 (Rhizobium johnstonii (strain DSM 114642 / LMG 32736 / 3841) (Rhizobium leguminosarum bv. viciae)).